Consider the following 487-residue polypeptide: Steroid 21-hydroxylase (487 aa).

Positions 92 and 117 each coordinate heme b. Residue R228 participates in 17alpha-hydroxyprogesterone binding. A progesterone-binding site is contributed by R228. Positions 357, 418, and 420 each coordinate heme b.

Belongs to the cytochrome P450 family. It depends on heme b as a cofactor.

It localises to the endoplasmic reticulum membrane. The protein localises to the microsome membrane. It carries out the reaction progesterone + reduced [NADPH--hemoprotein reductase] + O2 = 21-hydroxyprogesterone + oxidized [NADPH--hemoprotein reductase] + H2O + H(+). The enzyme catalyses 17alpha-hydroxyprogesterone + reduced [NADPH--hemoprotein reductase] + O2 = 11-deoxycortisol + oxidized [NADPH--hemoprotein reductase] + H2O + H(+). Functionally, a cytochrome P450 monooxygenase that plays a major role in adrenal steroidogenesis. Catalyzes the hydroxylation at C-21 of progesterone and 17alpha-hydroxyprogesterone to respectively form 11-deoxycorticosterone and 11-deoxycortisol, intermediate metabolites in the biosynthetic pathway of mineralocorticoids and glucocorticoids. Mechanistically, uses molecular oxygen inserting one oxygen atom into a substrate, and reducing the second into a water molecule, with two electrons provided by NADPH via cytochrome P450 reductase (CPR; NADPH-ferrihemoprotein reductase). This is Steroid 21-hydroxylase (Cyp21) from Mus musculus (Mouse).